We begin with the raw amino-acid sequence, 354 residues long: Protein Wnt-9a (354 aa).

A signal peptide spans 1-15 (MALLRALLGLLACTP). 5 cysteine pairs are disulfide-bonded: Cys85/Cys96, Cys133/Cys141, Cys143/Cys160, Cys207/Cys221, and Cys209/Cys216. Asn95 carries N-linked (GlcNAc...) asparagine glycosylation. A lipid anchor (O-palmitoleoyl serine; by PORCN) is attached at Ser213. Positions 246–271 (GSTTNEATGEGDISPPKKSIPGHSDQ) are disordered. Cystine bridges form between Cys288/Cys313, Cys302/Cys308, Cys312/Cys352, Cys328/Cys343, Cys330/Cys340, and Cys335/Cys336.

The protein belongs to the Wnt family. Post-translationally, palmitoleoylation is required for efficient binding to frizzled receptors. Depalmitoleoylation leads to Wnt signaling pathway inhibition.

Its subcellular location is the secreted. The protein localises to the extracellular space. The protein resides in the extracellular matrix. Functionally, ligand for members of the frizzled family of seven transmembrane receptors. Functions in the canonical Wnt/beta-catenin signaling pathway. Plays a role in embryonic chondrocyte maturation and in embryonic bone mineralization. This chain is Protein Wnt-9a (WNT9A), found in Gallus gallus (Chicken).